The sequence spans 384 residues: PqqA peptide cyclase (384 aa).

Residues I14–Q230 form the Radical SAM core domain. Residues C28, C32, and C35 each coordinate [4Fe-4S] cluster.

This sequence belongs to the radical SAM superfamily. PqqE family. As to quaternary structure, interacts with PqqD. The interaction is necessary for activity of PqqE. [4Fe-4S] cluster is required as a cofactor.

The enzyme catalyses [PQQ precursor protein] + S-adenosyl-L-methionine = E-Y cross-linked-[PQQ precursor protein] + 5'-deoxyadenosine + L-methionine + H(+). The protein operates within cofactor biosynthesis; pyrroloquinoline quinone biosynthesis. Catalyzes the cross-linking of a glutamate residue and a tyrosine residue in the PqqA protein as part of the biosynthesis of pyrroloquinoline quinone (PQQ). In Methylorubrum extorquens (strain CM4 / NCIMB 13688) (Methylobacterium extorquens), this protein is PqqA peptide cyclase.